We begin with the raw amino-acid sequence, 317 residues long: Putative 2-hydroxyacid dehydrogenase SA2098 (317 aa).

Residues 155 to 156 (EI), 234 to 236 (ASR), and D260 contribute to the NAD(+) site. R236 is a catalytic residue. E265 is an active-site residue. The Proton donor role is filled by H283. 283–286 (HIGN) serves as a coordination point for NAD(+).

The protein belongs to the D-isomer specific 2-hydroxyacid dehydrogenase family.

In Staphylococcus aureus (strain N315), this protein is Putative 2-hydroxyacid dehydrogenase SA2098.